The following is a 755-amino-acid chain: 1,4-alpha-glucan branching enzyme GlgB (755 aa).

D431 acts as the Nucleophile in catalysis. E484 serves as the catalytic Proton donor.

It belongs to the glycosyl hydrolase 13 family. GlgB subfamily. As to quaternary structure, monomer.

It carries out the reaction Transfers a segment of a (1-&gt;4)-alpha-D-glucan chain to a primary hydroxy group in a similar glucan chain.. The protein operates within glycan biosynthesis; glycogen biosynthesis. Catalyzes the formation of the alpha-1,6-glucosidic linkages in glycogen by scission of a 1,4-alpha-linked oligosaccharide from growing alpha-1,4-glucan chains and the subsequent attachment of the oligosaccharide to the alpha-1,6 position. In Prochlorococcus marinus (strain NATL2A), this protein is 1,4-alpha-glucan branching enzyme GlgB.